Consider the following 230-residue polypeptide: Orotidine 5'-phosphate decarboxylase (230 aa).

Substrate is bound by residues Asp-11, Lys-34, 61-70, Thr-117, Arg-179, Gln-188, Gly-208, and Arg-209; that span reads DLKLHDIPNT. Lys-63 (proton donor) is an active-site residue.

It belongs to the OMP decarboxylase family. Type 1 subfamily. In terms of assembly, homodimer.

It catalyses the reaction orotidine 5'-phosphate + H(+) = UMP + CO2. The protein operates within pyrimidine metabolism; UMP biosynthesis via de novo pathway; UMP from orotate: step 2/2. In terms of biological role, catalyzes the decarboxylation of orotidine 5'-monophosphate (OMP) to uridine 5'-monophosphate (UMP). This Streptococcus pyogenes serotype M28 (strain MGAS6180) protein is Orotidine 5'-phosphate decarboxylase.